A 489-amino-acid chain; its full sequence is 3-octaprenyl-4-hydroxybenzoate carboxy-lyase (489 aa).

A Mn(2+)-binding site is contributed by N172. Prenylated FMN-binding positions include 175–177 (IYR), 189–191 (RWL), and 194–195 (RG). E238 is a binding site for Mn(2+). D287 serves as the catalytic Proton donor.

This sequence belongs to the UbiD family. Homohexamer. Prenylated FMN serves as cofactor. It depends on Mn(2+) as a cofactor.

It localises to the cell membrane. The enzyme catalyses a 4-hydroxy-3-(all-trans-polyprenyl)benzoate + H(+) = a 2-(all-trans-polyprenyl)phenol + CO2. Its pathway is cofactor biosynthesis; ubiquinone biosynthesis. Functionally, catalyzes the decarboxylation of 3-octaprenyl-4-hydroxy benzoate to 2-octaprenylphenol, an intermediate step in ubiquinone biosynthesis. The protein is 3-octaprenyl-4-hydroxybenzoate carboxy-lyase of Psychromonas ingrahamii (strain DSM 17664 / CCUG 51855 / 37).